Consider the following 317-residue polypeptide: tRNA dimethylallyltransferase (317 aa).

14–21 lines the ATP pocket; that stretch reads GPTASGKS. Position 16–21 (16–21) interacts with substrate; the sequence is TASGKS. 2 interaction with substrate tRNA regions span residues 39 to 42 and 163 to 167; these read DSVL and QRIQR.

It belongs to the IPP transferase family. Monomer. Mg(2+) is required as a cofactor.

The enzyme catalyses adenosine(37) in tRNA + dimethylallyl diphosphate = N(6)-dimethylallyladenosine(37) in tRNA + diphosphate. Functionally, catalyzes the transfer of a dimethylallyl group onto the adenine at position 37 in tRNAs that read codons beginning with uridine, leading to the formation of N6-(dimethylallyl)adenosine (i(6)A). The sequence is that of tRNA dimethylallyltransferase from Xylella fastidiosa (strain M12).